Here is a 92-residue protein sequence, read N- to C-terminus: Dynein light chain 1, cytoplasmic (92 aa).

This sequence belongs to the dynein light chain family. As to quaternary structure, homodimer. Cytoplasmic dynein consists of two catalytic heavy chains (HCs) and a number of non-catalytic subunits which present intermediate chains (ICs), light intermediate chains (LICs) and light chains (LCs). Component of the nuclear pore complex (NPC). NPC constitutes the exclusive means of nucleocytoplasmic transport. NPCs allow the passive diffusion of ions and small molecules and the active, nuclear transport receptor-mediated bidirectional transport of macromolecules such as proteins, RNAs, ribonucleoparticles (RNPs), and ribosomal subunits across the nuclear envelope. Due to its 8-fold rotational symmetry, all subunits are present with 8 copies or multiples thereof. Part of the NUP82 subcomplex. In the complex, interacts directly with Nup159.

The protein localises to the cytoplasm. It localises to the cytoskeleton. Its subcellular location is the nucleus. It is found in the nuclear pore complex. Acts as one of several non-catalytic accessory components of the cytoplasmic dynein complex that are thought to be involved in linking dynein to cargos and to adapter proteins that regulate dynein function. Cytoplasmic dynein 1 acts as a motor for the intracellular retrograde motility of vesicles and organelles along microtubules. May play a role in changing or maintaining the spatial distribution of cytoskeletal structures. Also a component of the nuclear pore complex where it may contribute to the stable association of the Nup82 subcomplex with the NPC. This is Dynein light chain 1, cytoplasmic (DYN2) from Saccharomyces cerevisiae (strain ATCC 204508 / S288c) (Baker's yeast).